We begin with the raw amino-acid sequence, 736 residues long: 1,4-alpha-glucan branching enzyme GlgB (736 aa).

Asp-415 (nucleophile) is an active-site residue. The Proton donor role is filled by Glu-470.

The protein belongs to the glycosyl hydrolase 13 family. GlgB subfamily. In terms of assembly, monomer.

It carries out the reaction Transfers a segment of a (1-&gt;4)-alpha-D-glucan chain to a primary hydroxy group in a similar glucan chain.. Its pathway is glycan biosynthesis; glycogen biosynthesis. Its function is as follows. Catalyzes the formation of the alpha-1,6-glucosidic linkages in glycogen by scission of a 1,4-alpha-linked oligosaccharide from growing alpha-1,4-glucan chains and the subsequent attachment of the oligosaccharide to the alpha-1,6 position. The polypeptide is 1,4-alpha-glucan branching enzyme GlgB (Paraburkholderia xenovorans (strain LB400)).